The primary structure comprises 89 residues: MADVVASIRVMPDSADRDLNELMDALKAAVPAGTKFQKFELKPIAFGLKAIMATVTVDDSEGGTEPVEEAWSKVPGVESVNVEATGRAF.

Belongs to the EF-1-beta/EF-1-delta family.

In terms of biological role, promotes the exchange of GDP for GTP in EF-1-alpha/GDP, thus allowing the regeneration of EF-1-alpha/GTP that could then be used to form the ternary complex EF-1-alpha/GTP/AAtRNA. The sequence is that of Elongation factor 1-beta from Methanocella arvoryzae (strain DSM 22066 / NBRC 105507 / MRE50).